We begin with the raw amino-acid sequence, 203 residues long: Orotate phosphoribosyltransferase (203 aa).

5-phospho-alpha-D-ribose 1-diphosphate-binding positions include R94, K98, H100, and 120-128; that span reads EDLISTGGS. S124 serves as a coordination point for orotate.

This sequence belongs to the purine/pyrimidine phosphoribosyltransferase family. PyrE subfamily. As to quaternary structure, homodimer. Requires Mg(2+) as cofactor.

The catalysed reaction is orotidine 5'-phosphate + diphosphate = orotate + 5-phospho-alpha-D-ribose 1-diphosphate. It functions in the pathway pyrimidine metabolism; UMP biosynthesis via de novo pathway; UMP from orotate: step 1/2. In terms of biological role, catalyzes the transfer of a ribosyl phosphate group from 5-phosphoribose 1-diphosphate to orotate, leading to the formation of orotidine monophosphate (OMP). The sequence is that of Orotate phosphoribosyltransferase from Staphylococcus saprophyticus subsp. saprophyticus (strain ATCC 15305 / DSM 20229 / NCIMB 8711 / NCTC 7292 / S-41).